A 212-amino-acid chain; its full sequence is MAIGLVGRKCGMTRIFTDAGVSVPVTVIEVDPNRITQIKTLETDGYQAVQVTTGERRESRVTNAQKGHFAKAGVAAGRLVKEFRVTEAELEGREIGGTIGVDLFTVGQVVDVTGQSKGKGFQGGVKRWNFRTQDATHGNSVSHRVLGSTGQNQTPGRVFKGKKMAGHLGDERVTVQGLEIVSIDAERSVLVVKGAIPGATGGDVIVRPTIKA.

An N5-methylglutamine modification is found at Q153.

This sequence belongs to the universal ribosomal protein uL3 family. As to quaternary structure, part of the 50S ribosomal subunit. Forms a cluster with proteins L14 and L19. Post-translationally, methylated by PrmB.

One of the primary rRNA binding proteins, it binds directly near the 3'-end of the 23S rRNA, where it nucleates assembly of the 50S subunit. In Acinetobacter baylyi (strain ATCC 33305 / BD413 / ADP1), this protein is Large ribosomal subunit protein uL3.